A 418-amino-acid polypeptide reads, in one-letter code: Arrestin domain-containing protein 4 (418 aa).

2 short sequence motifs (PPxY motif) span residues 350–353 and 395–398; these read PPNY and PPLY.

This sequence belongs to the arrestin family. Interacts with ADRB2. Interacts (via PPxY motifs) with ITCH, NEDD4L and WWP2. Interacts with AVPR2. Identified in a complex containing at least ARRDC4, AVPR2 and HGS. Interacts with SLC11A2; controls the incorporation of SLC11A2 into extracellular vesicles through an ubiquitination-dependent mechanism. Interacts with TRIM65.

Its subcellular location is the early endosome. It localises to the cell membrane. The protein resides in the cytoplasmic vesicle. In terms of biological role, functions as an adapter recruiting ubiquitin-protein ligases to their specific substrates. Plays a role in endocytosis of activated G protein-coupled receptors (GPCRs). Through an ubiquitination-dependent mechanism also plays a role in the incorporation of SLC11A2 into extracellular vesicles. May play a role in glucose uptake. Participates in innate immune response by promoting IFIH1/MDA5 activation through interaction with TRIM65. The chain is Arrestin domain-containing protein 4 (ARRDC4) from Homo sapiens (Human).